A 227-amino-acid polypeptide reads, in one-letter code: PKHD-type hydroxylase BamMC406_5004 (227 aa).

Residues 80-179 (QVYPPLFNRY…RVASFFWVQS (100 aa)) form the Fe2OG dioxygenase domain. Fe cation is bound by residues His-98, Asp-100, and His-160. Arg-170 lines the 2-oxoglutarate pocket.

Requires Fe(2+) as cofactor. L-ascorbate is required as a cofactor.

The protein is PKHD-type hydroxylase BamMC406_5004 of Burkholderia ambifaria (strain MC40-6).